The following is a 159-amino-acid chain: Ribonuclease H (159 aa).

In terms of domain architecture, RNase H type-1 spans 2–144 (SQDPVIIHTD…ADELATRGLQ (143 aa)). The Mg(2+) site is built by D11, E50, D72, and D136.

Belongs to the RNase H family. Monomer. Mg(2+) serves as cofactor.

It localises to the cytoplasm. It catalyses the reaction Endonucleolytic cleavage to 5'-phosphomonoester.. Its function is as follows. Endonuclease that specifically degrades the RNA of RNA-DNA hybrids. The chain is Ribonuclease H from Mycolicibacterium smegmatis (strain ATCC 700084 / mc(2)155) (Mycobacterium smegmatis).